We begin with the raw amino-acid sequence, 219 residues long: Putative mediator of RNA polymerase II transcription subunit 10 (219 aa).

Positions 1–39 (MEQQQPQQQNDGQQQQQQQQQHQQQQQQQQQQQQQQQQS) are enriched in low complexity. Disordered stretches follow at residues 1-42 (MEQQ…SEQE) and 177-219 (KETQ…INNN). Coiled-coil stretches lie at residues 13 to 74 (QQQQ…VVEE) and 166 to 219 (EYAE…INNN). Residues 177 to 192 (KETQEQQNDDQIKVDD) are compositionally biased toward basic and acidic residues. Residues 194 to 219 (NNNNNNNNNNNYNNNNNNNNNNINNN) are compositionally biased toward low complexity.

The protein belongs to the Mediator complex subunit 10 family. In terms of assembly, component of the Mediator complex.

The protein resides in the nucleus. Its function is as follows. Component of the Mediator complex, a coactivator involved in the regulated transcription of nearly all RNA polymerase II-dependent genes. Mediator functions as a bridge to convey information from gene-specific regulatory proteins to the basal RNA polymerase II transcription machinery. Mediator is recruited to promoters by direct interactions with regulatory proteins and serves as a scaffold for the assembly of a functional preinitiation complex with RNA polymerase II and the general transcription factors. The chain is Putative mediator of RNA polymerase II transcription subunit 10 (med10) from Dictyostelium discoideum (Social amoeba).